The chain runs to 1073 residues: Carbamoyl phosphate synthase large chain (1073 aa).

The segment at 2–403 is carboxyphosphate synthetic domain; that stretch reads PKRTDIKSIL…SLQKALRGLE (402 aa). ATP is bound by residues R129, R169, G175, G176, E208, L210, E215, G241, I242, H243, Q285, and E299. Residues 133–328 form the ATP-grasp 1 domain; it reads DVAMKKIGLE…IAKVAAKLAV (196 aa). Q285, E299, and N301 together coordinate Mg(2+). Residues Q285, E299, and N301 each contribute to the Mn(2+) site. Residues 404-553 form an oligomerization domain region; the sequence is VGATGFDPKV…YSTYEEECEA (150 aa). Residues 554 to 936 are carbamoyl phosphate synthetic domain; sequence NPSTDREKIM…AFAKAQLGSN (383 aa). One can recognise an ATP-grasp 2 domain in the interval 679–870; sequence QHAVERLKLK…LAKVAARVMA (192 aa). ATP-binding residues include R715, H754, L756, E761, G786, V787, H788, S789, Q829, and E841. The Mg(2+) site is built by Q829, E841, and N843. 3 residues coordinate Mn(2+): Q829, E841, and N843. The MGS-like domain maps to 937-1073; sequence STMKKHGRAL…SVQEMHAQIK (137 aa). The tract at residues 937–1073 is allosteric domain; the sequence is STMKKHGRAL…SVQEMHAQIK (137 aa).

This sequence belongs to the CarB family. As to quaternary structure, composed of two chains; the small (or glutamine) chain promotes the hydrolysis of glutamine to ammonia, which is used by the large (or ammonia) chain to synthesize carbamoyl phosphate. Tetramer of heterodimers (alpha,beta)4. Mg(2+) serves as cofactor. Requires Mn(2+) as cofactor.

It carries out the reaction hydrogencarbonate + L-glutamine + 2 ATP + H2O = carbamoyl phosphate + L-glutamate + 2 ADP + phosphate + 2 H(+). The enzyme catalyses hydrogencarbonate + NH4(+) + 2 ATP = carbamoyl phosphate + 2 ADP + phosphate + 2 H(+). The protein operates within amino-acid biosynthesis; L-arginine biosynthesis; carbamoyl phosphate from bicarbonate: step 1/1. It functions in the pathway pyrimidine metabolism; UMP biosynthesis via de novo pathway; (S)-dihydroorotate from bicarbonate: step 1/3. Its function is as follows. Large subunit of the glutamine-dependent carbamoyl phosphate synthetase (CPSase). CPSase catalyzes the formation of carbamoyl phosphate from the ammonia moiety of glutamine, carbonate, and phosphate donated by ATP, constituting the first step of 2 biosynthetic pathways, one leading to arginine and/or urea and the other to pyrimidine nucleotides. The large subunit (synthetase) binds the substrates ammonia (free or transferred from glutamine from the small subunit), hydrogencarbonate and ATP and carries out an ATP-coupled ligase reaction, activating hydrogencarbonate by forming carboxy phosphate which reacts with ammonia to form carbamoyl phosphate. The protein is Carbamoyl phosphate synthase large chain of Escherichia coli (strain K12).